Consider the following 189-residue polypeptide: Probable RNA 2'-phosphotransferase (189 aa).

This sequence belongs to the KptA/TPT1 family.

Its function is as follows. Removes the 2'-phosphate from RNA via an intermediate in which the phosphate is ADP-ribosylated by NAD followed by a presumed transesterification to release the RNA and generate ADP-ribose 1''-2''-cyclic phosphate (APPR&gt;P). May function as an ADP-ribosylase. This is Probable RNA 2'-phosphotransferase from Streptomyces griseus subsp. griseus (strain JCM 4626 / CBS 651.72 / NBRC 13350 / KCC S-0626 / ISP 5235).